A 327-amino-acid polypeptide reads, in one-letter code: Spermidine/putrescine import ATP-binding protein PotA (327 aa).

Residues 5-235 (IKVEAVEKHF…PKTLFVATFI (231 aa)) form the ABC transporter domain. 37 to 44 (GPSGCGKT) is a binding site for ATP.

It belongs to the ABC transporter superfamily. Spermidine/putrescine importer (TC 3.A.1.11.1) family. The complex is composed of two ATP-binding proteins (PotA), two transmembrane proteins (PotB and PotC) and a solute-binding protein (PotD).

It localises to the cell membrane. It catalyses the reaction ATP + H2O + polyamine-[polyamine-binding protein]Side 1 = ADP + phosphate + polyamineSide 2 + [polyamine-binding protein]Side 1.. Functionally, part of the ABC transporter complex PotABCD involved in spermidine/putrescine import. Responsible for energy coupling to the transport system. The chain is Spermidine/putrescine import ATP-binding protein PotA from Bacillus thuringiensis subsp. konkukian (strain 97-27).